A 173-amino-acid chain; its full sequence is Crossover junction endodeoxyribonuclease RuvC (173 aa).

Catalysis depends on residues D8, E67, and D139. Positions 8, 67, and 139 each coordinate Mg(2+).

Belongs to the RuvC family. In terms of assembly, homodimer which binds Holliday junction (HJ) DNA. The HJ becomes 2-fold symmetrical on binding to RuvC with unstacked arms; it has a different conformation from HJ DNA in complex with RuvA. In the full resolvosome a probable DNA-RuvA(4)-RuvB(12)-RuvC(2) complex forms which resolves the HJ. It depends on Mg(2+) as a cofactor.

The protein resides in the cytoplasm. It carries out the reaction Endonucleolytic cleavage at a junction such as a reciprocal single-stranded crossover between two homologous DNA duplexes (Holliday junction).. Its function is as follows. The RuvA-RuvB-RuvC complex processes Holliday junction (HJ) DNA during genetic recombination and DNA repair. Endonuclease that resolves HJ intermediates. Cleaves cruciform DNA by making single-stranded nicks across the HJ at symmetrical positions within the homologous arms, yielding a 5'-phosphate and a 3'-hydroxyl group; requires a central core of homology in the junction. The consensus cleavage sequence is 5'-(A/T)TT(C/G)-3'. Cleavage occurs on the 3'-side of the TT dinucleotide at the point of strand exchange. HJ branch migration catalyzed by RuvA-RuvB allows RuvC to scan DNA until it finds its consensus sequence, where it cleaves and resolves the cruciform DNA. This chain is Crossover junction endodeoxyribonuclease RuvC, found in Vibrio cholerae serotype O1 (strain ATCC 39541 / Classical Ogawa 395 / O395).